The following is a 224-amino-acid chain: Cytidylate kinase (224 aa).

Position 11-19 (11-19) interacts with ATP; the sequence is GPAGAGKST.

This sequence belongs to the cytidylate kinase family. Type 1 subfamily.

The protein localises to the cytoplasm. The enzyme catalyses CMP + ATP = CDP + ADP. It carries out the reaction dCMP + ATP = dCDP + ADP. The protein is Cytidylate kinase of Lysinibacillus sphaericus (strain C3-41).